A 407-amino-acid polypeptide reads, in one-letter code: Lysophospholipid transporter LplT (407 aa).

Helical transmembrane passes span 18 to 38 (AVII…FATL), 53 to 73 (FLQM…GQIA), 91 to 111 (AGAL…LVGV), 139 to 159 (LMEA…GVLA), 163 to 183 (IYGA…ANML), 229 to 249 (WGAG…ALGI), 257 to 277 (LLNA…AKLV), 286 to 306 (LPAG…HNLM), 310 to 330 (SLLI…NALL), 343 to 365 (AIAV…YSLV), and 375 to 395 (IGIG…VWLI).

This sequence belongs to the major facilitator superfamily. LplT (TC 2.A.1.42) family.

It is found in the cell inner membrane. Functionally, catalyzes the facilitated diffusion of 2-acyl-glycero-3-phosphoethanolamine (2-acyl-GPE) into the cell. The chain is Lysophospholipid transporter LplT from Pectobacterium carotovorum subsp. carotovorum (strain PC1).